Here is a 288-residue protein sequence, read N- to C-terminus: tRNA dimethylallyltransferase (288 aa).

17 to 24 (GPTASGKS) lines the ATP pocket. 19–24 (TASGKS) contacts substrate.

The protein belongs to the IPP transferase family. In terms of assembly, monomer. Mg(2+) is required as a cofactor.

The enzyme catalyses adenosine(37) in tRNA + dimethylallyl diphosphate = N(6)-dimethylallyladenosine(37) in tRNA + diphosphate. Functionally, catalyzes the transfer of a dimethylallyl group onto the adenine at position 37 in tRNAs that read codons beginning with uridine, leading to the formation of N6-(dimethylallyl)adenosine (i(6)A). This is tRNA dimethylallyltransferase from Ruegeria sp. (strain TM1040) (Silicibacter sp.).